A 256-amino-acid polypeptide reads, in one-letter code: Protein YIPF5 (256 aa).

Over 1 to 125 (MSNFDNFNTD…ADGSIMNETD (125 aa)) the chain is Cytoplasmic. The chain crosses the membrane as a helical span at residues 126–146 (LAGPMVFCLAFGATLLLAGKI). Gln147 is a topological domain (lumenal). Residues 148–168 (FGYVYGISAMGCLGMYCLLNL) form a helical membrane-spanning segment. The Cytoplasmic portion of the chain corresponds to 169–172 (MSMT). A helical membrane pass occupies residues 173–193 (GVSFGCVSSVLGYCLLPMIIL). At 194–195 (ST) the chain is on the lumenal side. A helical membrane pass occupies residues 196-216 (FAVIFSLQGILGIVLAALIIG). Over 217–235 (WCSFSASKIFISALAMDGQ) the chain is Cytoplasmic. Residues 236-256 (QLLVAYPCALLYGVFALISVF) traverse the membrane as a helical segment.

It belongs to the YIP1 family.

The protein localises to the endoplasmic reticulum membrane. Its subcellular location is the golgi apparatus. It localises to the cis-Golgi network membrane. Its function is as follows. Plays a role in transport between endoplasmic reticulum and Golgi. This Xenopus laevis (African clawed frog) protein is Protein YIPF5 (yipf5).